A 324-amino-acid polypeptide reads, in one-letter code: Glycerol-3-phosphate dehydrogenase [NAD(P)+] (324 aa).

Residues S10, F11, R31, and K106 each contribute to the NADPH site. Sn-glycerol 3-phosphate is bound by residues K106, G134, and S136. Residue A138 coordinates NADPH. 5 residues coordinate sn-glycerol 3-phosphate: K189, D244, S254, R255, and N256. K189 (proton acceptor) is an active-site residue. R255 is a binding site for NADPH. 2 residues coordinate NADPH: I279 and E281.

It belongs to the NAD-dependent glycerol-3-phosphate dehydrogenase family.

Its subcellular location is the cytoplasm. It carries out the reaction sn-glycerol 3-phosphate + NAD(+) = dihydroxyacetone phosphate + NADH + H(+). It catalyses the reaction sn-glycerol 3-phosphate + NADP(+) = dihydroxyacetone phosphate + NADPH + H(+). It participates in membrane lipid metabolism; glycerophospholipid metabolism. Catalyzes the reduction of the glycolytic intermediate dihydroxyacetone phosphate (DHAP) to sn-glycerol 3-phosphate (G3P), the key precursor for phospholipid synthesis. The sequence is that of Glycerol-3-phosphate dehydrogenase [NAD(P)+] from Ehrlichia canis (strain Jake).